The sequence spans 369 residues: UDP-3-O-(3-hydroxymyristoyl)glucosamine N-acyltransferase (369 aa).

The active-site Proton acceptor is the H240.

Belongs to the transferase hexapeptide repeat family. LpxD subfamily. Homotrimer.

It catalyses the reaction a UDP-3-O-[(3R)-3-hydroxyacyl]-alpha-D-glucosamine + a (3R)-hydroxyacyl-[ACP] = a UDP-2-N,3-O-bis[(3R)-3-hydroxyacyl]-alpha-D-glucosamine + holo-[ACP] + H(+). It carries out the reaction UDP-3-O-[(3R)-3-hydroxytetradecanoyl]-alpha-D-glucosamine + (3R)-hydroxytetradecanoyl-[ACP] = UDP-2-N,3-O-bis[(3R)-3-hydroxytetradecanoyl]-alpha-D-glucosamine + holo-[ACP] + H(+). It functions in the pathway glycolipid biosynthesis; lipid IV(A) biosynthesis; lipid IV(A) from (3R)-3-hydroxytetradecanoyl-[acyl-carrier-protein] and UDP-N-acetyl-alpha-D-glucosamine: step 3/6. Its function is as follows. Catalyzes the N-acylation of UDP-3-O-(hydroxytetradecanoyl)glucosamine using 3-hydroxytetradecanoyl-ACP as the acyl donor. Is involved in the biosynthesis of lipid A, a phosphorylated glycolipid that anchors the lipopolysaccharide to the outer membrane of the cell. The polypeptide is UDP-3-O-(3-hydroxymyristoyl)glucosamine N-acyltransferase (Blochmanniella floridana).